A 210-amino-acid polypeptide reads, in one-letter code: Tetraspanin-31 (210 aa).

Residues 1-12 lie on the Cytoplasmic side of the membrane; it reads MVCGGFACSRNA. Residues 13–33 form a helical membrane-spanning segment; sequence LCALNVVYMLVGFLLIGVAAW. Topologically, residues 34–44 are extracellular; sequence GKGLGVVSSIH. A helical transmembrane segment spans residues 45 to 65; sequence IIGGVIAVGVFLLLIAVAGLV. The Cytoplasmic segment spans residues 66–72; it reads GAANHHQ. A helical membrane pass occupies residues 73–93; sequence VLLFFYMIILGLVFIFQFGIS. Residues 94-173 are Extracellular-facing; that stretch reads CSCLAINRNT…FLKHSDKALK (80 aa). Residues asparagine 109, asparagine 117, and asparagine 134 are each glycosylated (N-linked (GlcNAc...) asparagine). Residues 174–194 traverse the membrane as a helical segment; that stretch reads ILGGVGLFFSFTEILGVWLAM. Over 195-210 the chain is Cytoplasmic; the sequence is RFRNQKDPRANPSAFL.

This sequence belongs to the tetraspanin (TM4SF) family.

The protein localises to the membrane. This chain is Tetraspanin-31 (Tspan31), found in Mus musculus (Mouse).